The sequence spans 296 residues: Glycine--tRNA ligase alpha subunit (296 aa).

The protein belongs to the class-II aminoacyl-tRNA synthetase family. As to quaternary structure, tetramer of two alpha and two beta subunits.

The protein localises to the cytoplasm. The catalysed reaction is tRNA(Gly) + glycine + ATP = glycyl-tRNA(Gly) + AMP + diphosphate. The protein is Glycine--tRNA ligase alpha subunit of Exiguobacterium sibiricum (strain DSM 17290 / CCUG 55495 / CIP 109462 / JCM 13490 / 255-15).